The primary structure comprises 84 residues: MAYLKIVLVALMLVLAVSAMRRPDQQDQDISVAKRVACKCDDDGPDVRSATFTGTVDLGSCNSGWEKCASYYTVIADCCRKPRG.

The signal sequence occupies residues 1 to 19 (MAYLKIVLVALMLVLAVSA). The propeptide occupies 20 to 33 (MRRPDQQDQDISVA). 3 disulfide bridges follow: Cys38-Cys78, Cys40-Cys68, and Cys61-Cys79.

This sequence belongs to the sea anemone sodium channel inhibitory toxin family. Type II subfamily.

The protein localises to the secreted. It localises to the nematocyst. Its function is as follows. Binds specifically to the voltage-gated sodium channel (Nav) and delays its inactivation. This Cryptodendrum adhaesivum (Adhesive sea anemone) protein is Delta-thalatoxin-Cad1a.